Reading from the N-terminus, the 274-residue chain is Elongation factor Ts (274 aa).

The involved in Mg(2+) ion dislocation from EF-Tu stretch occupies residues 79–82; it reads TDFV.

Belongs to the EF-Ts family.

Its subcellular location is the cytoplasm. Associates with the EF-Tu.GDP complex and induces the exchange of GDP to GTP. It remains bound to the aminoacyl-tRNA.EF-Tu.GTP complex up to the GTP hydrolysis stage on the ribosome. The polypeptide is Elongation factor Ts (Azobacteroides pseudotrichonymphae genomovar. CFP2).